Consider the following 264-residue polypeptide: Undecaprenyl-diphosphatase (264 aa).

Helical transmembrane passes span 38-58, 75-95, 106-126, 136-156, 181-201, 217-237, and 242-262; these read RSDF…VLVF, REYV…GLVV, VSPV…VEAY, VTWT…VFPG, FVFL…FLEM, VAFL…MGYI, and FTAF…WLPS.

The protein belongs to the UppP family.

The protein resides in the cell membrane. The enzyme catalyses di-trans,octa-cis-undecaprenyl diphosphate + H2O = di-trans,octa-cis-undecaprenyl phosphate + phosphate + H(+). Functionally, catalyzes the dephosphorylation of undecaprenyl diphosphate (UPP). Confers resistance to bacitracin. This Stenotrophomonas maltophilia (strain K279a) protein is Undecaprenyl-diphosphatase.